We begin with the raw amino-acid sequence, 122 residues long: Large ribosomal subunit protein uL14 (122 aa).

The protein belongs to the universal ribosomal protein uL14 family. In terms of assembly, part of the 50S ribosomal subunit. Forms a cluster with proteins L3 and L19. In the 70S ribosome, L14 and L19 interact and together make contacts with the 16S rRNA in bridges B5 and B8.

Functionally, binds to 23S rRNA. Forms part of two intersubunit bridges in the 70S ribosome. This Brevibacillus brevis (strain 47 / JCM 6285 / NBRC 100599) protein is Large ribosomal subunit protein uL14.